The following is a 165-amino-acid chain: Small histone ubiquitination factor 1 (165 aa).

Positions 1 to 17 are enriched in basic and acidic residues; sequence MSSRRNDYHYDGNDHQY. The disordered stretch occupies residues 1–86; the sequence is MSSRRNDYHY…STRASFGAAS (86 aa). 2 stretches are compositionally biased toward low complexity: residues 29–38 and 50–60; these read SFYESSYRSR and SSYDSPSSSTN. Over residues 73-86 the composition is skewed to polar residues; sequence PSNNSTRASFGAAS.

Component of the histone H2B ubiquitin ligase complex (HULC) composed of at least brl1, brl2, rhp6 and shf1.

It localises to the nucleus. It is found in the cytoplasm. The protein resides in the cytoskeleton. The protein localises to the microtubule organizing center. Its subcellular location is the spindle pole body. Its function is as follows. Component of the histone H2B ubiquitin ligase complex (HULC) which plays a role in transcription regulation by catalyzing the monoubiquitination of histone H2B to form H2BK123ub1. H2BK123ub1 gives a specific tag for epigenetic transcriptional activation and is also a prerequisite for H3K4me and H3K79me formation. This Schizosaccharomyces pombe (strain 972 / ATCC 24843) (Fission yeast) protein is Small histone ubiquitination factor 1 (shf1).